We begin with the raw amino-acid sequence, 268 residues long: Forkhead box protein R1 (268 aa).

Positions 91–126 are disordered; that stretch reads EDSCSEASEVQQPLPPCRQKRKQRRSTVPLPLAPGR. Positions 149-248 form a DNA-binding region, fork-head; the sequence is RPPLHYFHLI…KEARTLASTQ (100 aa).

Expressed in adult germ cells (at protein level). Expressed in heart, liver, lung and embryonic brain.

The protein localises to the nucleus. It localises to the cytoplasm. The protein resides in the perinuclear region. In terms of biological role, transcription factor which acts as both an activator and a repressor. Activates transcription of a number of genes including the heat shock chaperones HSPA1A and HSPA6 and the antioxidant NADPH-dependent reductase DHRS2 which are involved in protection against oxidative stress. Required for normal brain development. This chain is Forkhead box protein R1 (Foxr1), found in Mus musculus (Mouse).